Here is a 99-residue protein sequence, read N- to C-terminus: Plastocyanin A'/A'' (99 aa).

In terms of domain architecture, Plastocyanin-like spans 1-99 (IEVLLGSDDG…AGMVGKVTVN (99 aa)). 4 residues coordinate Cu cation: His-37, Cys-84, His-87, and Met-92.

It belongs to the plastocyanin family. It depends on Cu(2+) as a cofactor.

It localises to the plastid. The protein resides in the chloroplast thylakoid membrane. In terms of biological role, participates in electron transfer between P700 and the cytochrome b6-f complex in photosystem I. This Nicotiana tabacum (Common tobacco) protein is Plastocyanin A'/A''.